A 506-amino-acid chain; its full sequence is Maturase K (506 aa).

It belongs to the intron maturase 2 family. MatK subfamily.

The protein localises to the plastid. It localises to the chloroplast. Functionally, usually encoded in the trnK tRNA gene intron. Probably assists in splicing its own and other chloroplast group II introns. This is Maturase K from Austrosteenisia blackii (Blood vine).